Reading from the N-terminus, the 845-residue chain is Synaptonemal complex protein 1 (845 aa).

The interaction with SYCE3 stretch occupies residues 59 to 215; that stretch reads ETRQVYVDLN…YQLTEEKEAQ (157 aa). Coiled-coil stretches lie at residues 64–211 and 244–544; these read YVDL…LTEE and LRTE…EIEV. The required for pH-induced assembly of C-terminal ends into antiparallel tetramers stretch occupies residues 550–644; the sequence is EKLLGEVEKA…VSLKKQLEIE (95 aa). The Nuclear localization signal motif lies at 553-556; it reads LGEV. The stretch at 620–663 forms a coiled coil; that stretch reads KTALETELSNIRNELVSLKKQLEIEREEKEKLKLEKENTAILKD. Residues 657–845 form a DNA-binding region; sequence NTAILKDKKD…RLKEAEKLFA (189 aa). At Ser676 the chain carries Phosphoserine. Residues 684 to 703 are compositionally biased toward polar residues; the sequence is FDSKTTPSQNISRISSSMES. Positions 684–709 are disordered; sequence FDSKTTPSQNISRISSSMESGKTKDN. Positions 753–756 match the Nuclear localization signal motif; that stretch reads KKRK. Positions 786–808 are disordered; sequence LYNNNSPNSHLTPKQTPLSLSTP.

Structural component of synaptonemal complexes. Homotetramer that consists of an N-terminal four-helical bundle that bifurcates into two elongated C-terminal dimeric coiled coils. This tetrameric building block potentially self-assembles into a supramolecular zipper-like lattice to mediate meiotic chromosome synapsis. Self-assembly is likely initiated by local proton density at chromosome axis, which is predicted to trigger antiparallel back to back assembly of adjacent C-terminal ends into tetrameric structures that anchor to chromosomal DNA. Then the N-terminal ends are predicted to undergo cooperative antiparallel head to head assembly at the midline of synaptonemal complexes central element to form a zipper-like lattice between properly aligned homologous chromosomes. The nascent synapsis generated by SYCP1 is stabilized through interaction with central element proteins SYCE1 and SYCE2. Interacts (via tetrameric core) with SYCE3; the interaction remodels SYCP1 homotetramers to 2:1 heterotrimers with SYCE3. SYCP1/SYCE3 heterotrimers form lattice assemblies as part of the mature synaptonemal complex via both lateral and head-to-head interactions. Forms a complex with EWSR1, PRDM9, SYCP3 and REC8; complex formation is dependent of phosphorylated form of REC8 and requires PRDM9 bound to hotspot DNA; EWSR1 joins PRDM9 with the chromosomal axis through REC8. Interacts with SPO16.

The protein resides in the nucleus. It is found in the chromosome. The protein localises to the centromere. Functionally, major component of the transverse filaments of synaptonemal complexes, formed between homologous chromosomes during meiotic prophase. Required for normal assembly of the central element of the synaptonemal complexes. Required for normal centromere pairing during meiosis. Required for normal meiotic chromosome synapsis during oocyte and spermatocyte development and for normal male and female fertility. The sequence is that of Synaptonemal complex protein 1 from Mesocricetus auratus (Golden hamster).